Reading from the N-terminus, the 806-residue chain is MDFINIEKKWQEFWWKNKSFEPKDDFNLPKKYILSMLPYPSGEIHMGHVRNYTIGDALARYYRLHHYNVLHPMGFDSFGMPAENAAIKHGIHPKTWTYENIENMQKEFEALGFSFSKNREFATSDPDYTKFEQRFFIDLWEKGLIYRKKAMLNWCPNDKTVLANEQVIDGRCWRCDTEVIQKELYQYYLKITNYAEELLKDLEALEDHWPSQVLIMQKNWIGKSSGLQFGFKIADECLKACNGIQEIEVFTTRADTIYGVTYIAIAPEHPLVEHAIKQVSQEVSKMIKAILNTTQRERALEKKGAFLGIYAIHPLTKQKIPVWVANFALANYGSGALMGVPACDERDFEFANLYHIPIKVITQSPQNLPHTKEEVLKNSGEWSDLSSSVAREQIIAYFEKENLGKRVINYRLQDWGVSRQRYWGAPIPMIHCNHCGIVPETQLPVTLPEDIVIDGEGNPLEKHASWKFTQCPKCHKNALRETDTMDTFIQSSWYFLRYTTPKNQRENQAFDQNYLKYFMPVDTYIGGIEHAILHLLYARFFTKALRDLGYLHLDEPFKQLITQGMVLKNGAKMSKSKGNVVSPKEILKKYGADAARLFILFAAPPAKELEWNDSALEGAHRFIKRLYDKANAINPTTSKPEFKEVSLNEAQKLGRKKVYEALKKSHEIFNKAESAYSFNTLIASCMEALNALSAQNNERILCEGYFVLLQILEPIIPHTAWELSERLFKRENFKPIAIDEDALMEDFMTLGLTINGKRRAELKVNINASKEEIIVLAKKELEKYLENASVKKEIYVPNKLVNFVIA.

Residues Pro38–His48 carry the 'HIGH' region motif. The 'KMSKS' region motif lies at Lys572–Ser576. Lys575 is an ATP binding site.

It belongs to the class-I aminoacyl-tRNA synthetase family.

It is found in the cytoplasm. It catalyses the reaction tRNA(Leu) + L-leucine + ATP = L-leucyl-tRNA(Leu) + AMP + diphosphate. The sequence is that of Leucine--tRNA ligase from Helicobacter pylori (strain ATCC 700392 / 26695) (Campylobacter pylori).